The primary structure comprises 200 residues: Glycerol-3-phosphate acyltransferase (200 aa).

5 helical membrane passes run 2–22, 51–71, 84–104, 114–134, and 158–178; these read FNIPAVAVSYLIGSLSFAVIV, KAAALTLLGDAAKGLVAVLLA, AIAAVALAALVGHMWPVFFGF, LGVLLALSPTTALVCALIWLV, and LFFMPHTSWIFATLAIAILVL.

It belongs to the PlsY family. As to quaternary structure, probably interacts with PlsX.

It is found in the cell inner membrane. The enzyme catalyses an acyl phosphate + sn-glycerol 3-phosphate = a 1-acyl-sn-glycero-3-phosphate + phosphate. Its pathway is lipid metabolism; phospholipid metabolism. In terms of biological role, catalyzes the transfer of an acyl group from acyl-phosphate (acyl-PO(4)) to glycerol-3-phosphate (G3P) to form lysophosphatidic acid (LPA). This enzyme utilizes acyl-phosphate as fatty acyl donor, but not acyl-CoA or acyl-ACP. The chain is Glycerol-3-phosphate acyltransferase from Neisseria meningitidis serogroup A / serotype 4A (strain DSM 15465 / Z2491).